The following is a 444-amino-acid chain: ATP-dependent protease ATPase subunit HslU (444 aa).

Residues Ile-18 and 60–65 (GVGKTE) contribute to the ATP site. Residues 143 to 163 (WGEVESHDSHSSTRQAFRKKL) are disordered. ATP contacts are provided by Asp-257, Glu-322, and Arg-394.

This sequence belongs to the ClpX chaperone family. HslU subfamily. As to quaternary structure, a double ring-shaped homohexamer of HslV is capped on each side by a ring-shaped HslU homohexamer. The assembly of the HslU/HslV complex is dependent on binding of ATP.

It localises to the cytoplasm. In terms of biological role, ATPase subunit of a proteasome-like degradation complex; this subunit has chaperone activity. The binding of ATP and its subsequent hydrolysis by HslU are essential for unfolding of protein substrates subsequently hydrolyzed by HslV. HslU recognizes the N-terminal part of its protein substrates and unfolds these before they are guided to HslV for hydrolysis. This is ATP-dependent protease ATPase subunit HslU from Haemophilus influenzae (strain PittEE).